A 535-amino-acid polypeptide reads, in one-letter code: Methylmalonate-semialdehyde/malonate-semialdehyde dehydrogenase [acylating], mitochondrial (535 aa).

The N-terminal 33 residues, Met-1–Phe-33, are a transit peptide targeting the mitochondrion. Lys-47, Lys-52, Lys-55, and Lys-76 each carry N6-acetyllysine; alternate. An N6-succinyllysine; alternate mark is found at Lys-47, Lys-52, Lys-55, and Lys-76. N6-acetyllysine is present on Lys-87. An N6-acetyllysine; alternate mark is found at Lys-117 and Lys-129. 2 positions are modified to N6-succinyllysine; alternate: Lys-117 and Lys-129. NAD(+)-binding residues include Ala-183, Phe-185, Lys-209, Glu-212, Arg-213, and Ser-262. Ser-262 is subject to Phosphoserine. An N6-acetyllysine modification is found at Lys-298. The Nucleophile role is filled by Cys-317. N6-acetyllysine occurs at positions 330 and 331. N6-acetyllysine; alternate occurs at positions 364 and 376. N6-succinyllysine; alternate occurs at positions 364 and 376. At Ser-380 the chain carries Phosphoserine. Lys-391 is subject to N6-succinyllysine. Glu-417 lines the NAD(+) pocket. Lys-500 carries the post-translational modification N6-acetyllysine. Lys-517 bears the N6-succinyllysine mark.

Belongs to the aldehyde dehydrogenase family. Homotetramer.

It localises to the mitochondrion. The catalysed reaction is 3-oxopropanoate + NAD(+) + CoA + H2O = hydrogencarbonate + acetyl-CoA + NADH + H(+). It carries out the reaction 2-methyl-3-oxopropanoate + NAD(+) + CoA + H2O = propanoyl-CoA + hydrogencarbonate + NADH + H(+). The enzyme catalyses (R)-2-methyl-3-oxopropanoate + NAD(+) + CoA + H2O = propanoyl-CoA + hydrogencarbonate + NADH + H(+). It catalyses the reaction (S)-2-methyl-3-oxopropanoate + NAD(+) + CoA + H2O = propanoyl-CoA + hydrogencarbonate + NADH + H(+). Malonate and methylmalonate semialdehyde dehydrogenase involved in the catabolism of valine, thymine, and compounds catabolized by way of beta-alanine, including uracil and cytidine. The chain is Methylmalonate-semialdehyde/malonate-semialdehyde dehydrogenase [acylating], mitochondrial from Homo sapiens (Human).